Reading from the N-terminus, the 495-residue chain is UDP-N-acetylmuramoyl-L-alanyl-D-glutamate--2,6-diaminopimelate ligase (495 aa).

Ser-29 is a UDP-N-acetyl-alpha-D-muramoyl-L-alanyl-D-glutamate binding site. Residue 111 to 117 (GTNGKTS) coordinates ATP. UDP-N-acetyl-alpha-D-muramoyl-L-alanyl-D-glutamate-binding positions include 153–154 (TT), Ser-180, Gln-186, and Arg-188. An N6-carboxylysine modification is found at Lys-220. Residues Arg-384, 408–411 (DNPR), Gly-459, and Glu-463 each bind meso-2,6-diaminopimelate. Residues 408-411 (DNPR) carry the Meso-diaminopimelate recognition motif motif.

It belongs to the MurCDEF family. MurE subfamily. It depends on Mg(2+) as a cofactor. Carboxylation is probably crucial for Mg(2+) binding and, consequently, for the gamma-phosphate positioning of ATP.

It localises to the cytoplasm. The enzyme catalyses UDP-N-acetyl-alpha-D-muramoyl-L-alanyl-D-glutamate + meso-2,6-diaminopimelate + ATP = UDP-N-acetyl-alpha-D-muramoyl-L-alanyl-gamma-D-glutamyl-meso-2,6-diaminopimelate + ADP + phosphate + H(+). It participates in cell wall biogenesis; peptidoglycan biosynthesis. In terms of biological role, catalyzes the addition of meso-diaminopimelic acid to the nucleotide precursor UDP-N-acetylmuramoyl-L-alanyl-D-glutamate (UMAG) in the biosynthesis of bacterial cell-wall peptidoglycan. The protein is UDP-N-acetylmuramoyl-L-alanyl-D-glutamate--2,6-diaminopimelate ligase of Xanthomonas oryzae pv. oryzae (strain MAFF 311018).